The chain runs to 259 residues: Protein unc-50 homolog (259 aa).

Residues 1–15 (MLPTSSPQIHRNGSL) are compositionally biased toward polar residues. Positions 1–22 (MLPTSSPQIHRNGSLSERDAAR) are disordered. The Cytoplasmic segment spans residues 1–80 (MLPTSSPQIH…TKDQWARDDP (80 aa)). A helical membrane pass occupies residues 81–101 (AFLVLLSIWLCVSTVGFGLVL). Topologically, residues 102-110 (DMGFVETLT) are lumenal. Residues 111-131 (LLLWVVFIDCIGVGLLISTLM) form a helical membrane-spanning segment. Residues 132–162 (WFVTNKYLMKHPNRDYDVEWGYAFDVHLNAF) are Cytoplasmic-facing. Residues 163–183 (YPLLVILHFLQLFFINHVVVI) form a helical membrane-spanning segment. At 184–198 (SSDWFLGYFVGNTMW) the chain is on the lumenal side. The helical transmembrane segment at 199 to 219 (LIAIGYYVYITFLGYSALPFL) threads the bilayer. The Cytoplasmic segment spans residues 220-222 (KNT). The helical transmembrane segment at 223-243 (VVLLYPFALLGLLYVLSISLG) threads the bilayer. Residues 244–259 (WNFTKGLCWFYKHRVQ) are Lumenal-facing.

The protein belongs to the unc-50 family.

It localises to the nucleus inner membrane. The protein resides in the golgi apparatus membrane. Functionally, involved in the cell surface expression of neuronal nicotinic receptors. Binds RNA. This chain is Protein unc-50 homolog (unc50), found in Danio rerio (Zebrafish).